The sequence spans 292 residues: DSC E3 ubiquitin ligase complex subunit 3 (292 aa).

The Extracellular portion of the chain corresponds to 1-243 (MSAEPLLPTH…PIANIKHNKD (243 aa)). Asparagine 11, asparagine 41, asparagine 77, asparagine 99, and asparagine 145 each carry an N-linked (GlcNAc...) asparagine glycan. Residues 244–264 (LLLGICVGFFFGVFGILLMKF) form a helical membrane-spanning segment. The Cytoplasmic portion of the chain corresponds to 265–273 (DGLFNRRQK). Residues 274–291 (MAIFAGVIVNVMFCLVRG) form a helical membrane-spanning segment. Position 292 (phenylalanine 292) is a topological domain, extracellular.

This sequence belongs to the dsc3 family. Component of the DSC E3 ligase complexes composed of at least TUL1, DSC2, DSC3, UBX3, CDC48 as well as VLD1 for the vacuole-localized complex or GLD1 for the Golgi/endosome-localized complex.

The protein resides in the endoplasmic reticulum membrane. In terms of biological role, component of the DSC E3 ubiquitin ligase complexes that tag proteins present in Golgi, endosome and vacuole membranes and function in protein homeostasis under non-stress conditions and support a role in protein quality control. Involved in endocytic protein trafficking. This Saccharomyces cerevisiae (strain ATCC 204508 / S288c) (Baker's yeast) protein is DSC E3 ubiquitin ligase complex subunit 3.